The sequence spans 493 residues: Galactose-1-phosphate uridylyltransferase (493 aa).

It belongs to the galactose-1-phosphate uridylyltransferase type 2 family.

The protein resides in the cytoplasm. The enzyme catalyses alpha-D-galactose 1-phosphate + UDP-alpha-D-glucose = alpha-D-glucose 1-phosphate + UDP-alpha-D-galactose. It participates in carbohydrate metabolism; galactose metabolism. This chain is Galactose-1-phosphate uridylyltransferase, found in Streptococcus thermophilus (strain ATCC BAA-250 / LMG 18311).